Reading from the N-terminus, the 1091-residue chain is Voltage-dependent calcium channel subunit alpha-2/delta-3 (1091 aa).

Residues 1–28 (MAGPGSPRRASRGASALLAAALLYAALG) form the signal peptide. Topologically, residues 29–1068 (DVVRSEQQIP…HPEENARECG (1040 aa)) are extracellular. Asn-166 carries N-linked (GlcNAc...) asparagine glycosylation. The VWFA domain occupies 256–438 (DVVILVDVSG…ENVMEYLHVL (183 aa)). Residues Asp-262, Ser-264, and Ser-266 each contribute to the a divalent metal cation site. The MIDAS-like motif motif lies at 262–266 (DVSGS). Asn-309 carries an N-linked (GlcNAc...) asparagine glycan. Cys-412 and Cys-1055 are joined by a disulfide. The Cache domain occupies 452–549 (WTEAYIDSTL…RLLYEEGKKR (98 aa)). N-linked (GlcNAc...) asparagine glycosylation is found at Asn-553, Asn-632, and Asn-793. At Tyr-924 the chain carries Phosphotyrosine. A helical membrane pass occupies residues 1069–1089 (GAPSLQAQTVLLLLPLLLMLF). Residues 1090 to 1091 (SR) are Cytoplasmic-facing.

It belongs to the calcium channel subunit alpha-2/delta family. Dimer formed of alpha-2-2 and delta-2 chains; disulfide-linked. Voltage-dependent calcium channels are multisubunit complexes, consisting of alpha-1 (CACNA1), alpha-2 (CACNA2D), beta (CACNB) and delta (CACNA2D) subunits in a 1:1:1:1 ratio. N-glycosylated. Post-translationally, may be proteolytically processed into subunits alpha-2-3 and delta-3 that are disulfide-linked. It is however unclear whether such cleavage really takes place in vivo and has a functional role. As to expression, only detected in brain. Not present in lung, testis, aorta, spleen, jejunum, ventricular muscle and kidney (at protein level). According to PubMed:11687876, it is brain-specific, while according to PubMed:11245980, it is widely expressed.

It localises to the membrane. Its function is as follows. The alpha-2/delta subunit of voltage-dependent calcium channels regulates calcium current density and activation/inactivation kinetics of the calcium channel. Acts as a regulatory subunit for P/Q-type calcium channel (CACNA1A), N-type (CACNA1B), L-type (CACNA1C OR CACNA1D) but not T-type (CACNA1G). This is Voltage-dependent calcium channel subunit alpha-2/delta-3 (CACNA2D3) from Homo sapiens (Human).